Consider the following 357-residue polypeptide: Peptide chain release factor 1 (357 aa).

Gln-234 bears the N5-methylglutamine mark.

The protein belongs to the prokaryotic/mitochondrial release factor family. In terms of processing, methylated by PrmC. Methylation increases the termination efficiency of RF1.

The protein localises to the cytoplasm. Functionally, peptide chain release factor 1 directs the termination of translation in response to the peptide chain termination codons UAG and UAA. The polypeptide is Peptide chain release factor 1 (Alkaliphilus oremlandii (strain OhILAs) (Clostridium oremlandii (strain OhILAs))).